The following is a 40-amino-acid chain: Large ribosomal subunit protein bL36A (40 aa).

Belongs to the bacterial ribosomal protein bL36 family.

The polypeptide is Large ribosomal subunit protein bL36A (Renibacterium salmoninarum (strain ATCC 33209 / DSM 20767 / JCM 11484 / NBRC 15589 / NCIMB 2235)).